A 116-amino-acid chain; its full sequence is Vesicle-associated membrane protein 2 (116 aa).

The segment at 1–33 (MSATAATAPPAAPAGEGGPPAPPPNLTSNRRLQ) is disordered. Position 2 is an N-acetylserine (S2). Topologically, residues 2–94 (SATAATAPPA…KRKYWWKNLK (93 aa)) are cytoplasmic. A v-SNARE coiled-coil homology domain is found at 31–91 (RLQQTQAQVD…AKLKRKYWWK (61 aa)). Residues 92–116 (NLKMMIILGVICAIILIIIIVYFST) are required for interaction with SEPT8. The helical; Anchor for type IV membrane protein transmembrane segment at 95-114 (MMIILGVICAIILIIIIVYF) threads the bilayer. Residues 115-116 (ST) are Vesicular-facing.

Belongs to the synaptobrevin family. As to quaternary structure, part of the SNARE core complex containing SNAP25, VAMP2 and STX1A; this complex constitutes the basic catalytic machinery of the complex neurotransmitter release apparatus. Recruited to the SNARE complex following binding of the SNARE complex component STX1A to STXBP1. This complex binds to CPLX1. Interacts with POPDC1 and STX4. Interacts with VAPA and VAPB. Interacts with WDFY2, PRKCZ and PRKCI. Forms a complex with WDFY2 and PRKCZ. Interacts (via N-terminus) with KCNB1 (via N-terminus and C-terminus); stimulates the channel inactivation rate of KCNB1. Interacts with SEPT8; the interaction inhibits interaction of VAMP2 with SYP. Interacts with SYP; the interaction is inhibited by interaction with SEPT8. Interacts with PICALM. Interacts with alpha-synuclein/SNCA. Interacts with STX3. Post-translationally, phosphorylated by PRKCZ in vitro and this phosphorylation is increased in the presence of WDFY2. (Microbial infection) Targeted and hydrolyzed by C.botulinum neurotoxin type B (BoNT/B, botB) which hydrolyzes the 76-Gln-|-Phe-77 bond and probably inhibits neurotransmitter release. In terms of processing, (Microbial infection) Targeted and hydrolyzed by C.botulinum neurotoxin type D (BoNT/D, botD) which probably hydrolyzes the 59-Lys-|-Leu-60 bond and inhibits neurotransmitter release. Note that humans are not known to be infected by C.botulinum type D. Post-translationally, (Microbial infection) Targeted and hydrolyzed by C.botulinum neurotoxin type F (BoNT/F, botF) which hydrolyzes the 58-Gln-|-Lys-59 bond and probably inhibits neurotransmitter release. (Microbial infection) Targeted and hydrolyzed by C.tetani tetanus toxin (tetX) which hydrolyzes the 76-Gln-|-Phe-77 bond and probably inhibits neurotransmitter release. In terms of tissue distribution, nervous system and skeletal muscle.

The protein resides in the cytoplasmic vesicle. It localises to the secretory vesicle. The protein localises to the synaptic vesicle membrane. Its subcellular location is the cell membrane. In terms of biological role, involved in the targeting and/or fusion of transport vesicles to their target membrane. Major SNARE protein of synaptic vesicles which mediates fusion of synaptic vesicles to release neurotransmitters. Essential for fast vesicular exocytosis and activity-dependent neurotransmitter release as well as fast endocytosis that mediates rapid reuse of synaptic vesicles. Modulates the gating characteristics of the delayed rectifier voltage-dependent potassium channel KCNB1. This is Vesicle-associated membrane protein 2 from Homo sapiens (Human).